We begin with the raw amino-acid sequence, 384 residues long: GDSL esterase/lipase At1g28670 (384 aa).

Residues Met1 to Ala24 form the signal peptide. Ser42 (nucleophile) is an active-site residue. 3 N-linked (GlcNAc...) asparagine glycosylation sites follow: Asn105, Asn138, and Asn321. Residues Asp346 and His349 contribute to the active site.

This sequence belongs to the 'GDSL' lipolytic enzyme family.

It localises to the secreted. The polypeptide is GDSL esterase/lipase At1g28670 (Arabidopsis thaliana (Mouse-ear cress)).